The primary structure comprises 94 residues: Co-chaperonin GroES (94 aa).

Belongs to the GroES chaperonin family. Heptamer of 7 subunits arranged in a ring. Interacts with the chaperonin GroEL.

Its subcellular location is the cytoplasm. Together with the chaperonin GroEL, plays an essential role in assisting protein folding. The GroEL-GroES system forms a nano-cage that allows encapsulation of the non-native substrate proteins and provides a physical environment optimized to promote and accelerate protein folding. GroES binds to the apical surface of the GroEL ring, thereby capping the opening of the GroEL channel. This chain is Co-chaperonin GroES, found in Ligilactobacillus salivarius (strain UCC118) (Lactobacillus salivarius).